A 148-amino-acid chain; its full sequence is UPF0260 protein Spro_2751 (148 aa).

Belongs to the UPF0260 family.

This chain is UPF0260 protein Spro_2751, found in Serratia proteamaculans (strain 568).